The sequence spans 250 residues: 5'-nucleotidase SurE (250 aa).

Residues D8, D9, S39, and N91 each coordinate a divalent metal cation.

Belongs to the SurE nucleotidase family. A divalent metal cation serves as cofactor.

It is found in the cytoplasm. The catalysed reaction is a ribonucleoside 5'-phosphate + H2O = a ribonucleoside + phosphate. Functionally, nucleotidase that shows phosphatase activity on nucleoside 5'-monophosphates. The polypeptide is 5'-nucleotidase SurE (Syntrophotalea carbinolica (strain DSM 2380 / NBRC 103641 / GraBd1) (Pelobacter carbinolicus)).